The following is a 379-amino-acid chain: Probable peptidoglycan glycosyltransferase FtsW (379 aa).

Over 1–15 (MHKTEAQTYLLYDRT) the chain is Cytoplasmic. The helical transmembrane segment at 16-36 (LLLLTMGLVGIGLVMVISTSM) threads the bilayer. At 37 to 52 (PIGVRLSEDPFYFARR) the chain is on the periplasmic side. The chain crosses the membrane as a helical span at residues 53 to 73 (YAFYLGLAVVLSLVTLGIPMA). The Cytoplasmic segment spans residues 74–79 (SWQRGS). A helical transmembrane segment spans residues 80–100 (SLILLITLIMLLLVLIAGQSV). Topologically, residues 101 to 113 (NGAVRWLALGPWR) are periplasmic. Residues 114–133 (IQPAELSKLALFCYLASYLV) traverse the membrane as a helical segment. The Cytoplasmic portion of the chain corresponds to 134-139 (RKAEEV). Residues 140-162 (RTNFWGFCKPIGVMVLLAILLLA) form a helical membrane-spanning segment. Residues 163-165 (QPD) are Periplasmic-facing. A helical transmembrane segment spans residues 166–183 (LGTVLVLFITTLAMLFLA). Over 184–186 (EAK) the chain is Cytoplasmic. The chain crosses the membrane as a helical span at residues 187–207 (IWQFLPIIGTGILAVMLLIIA). Residues 208-269 (KPYRRRRVTS…TEAHTDFICS (62 aa)) are Periplasmic-facing. A helical membrane pass occupies residues 270–290 (ILGEELGYFGVLLALLMVFLV). Topologically, residues 291 to 301 (AFRAMSIGRKA) are cytoplasmic. Residues 302–322 (LAINQIFSGFLACSIGIWFSF) traverse the membrane as a helical segment. Over 323-342 (QTMVNVGAAAGMLPTKGLTL) the chain is Periplasmic. A helical membrane pass occupies residues 343 to 363 (PFISYGGSSMLIMLTAIVLLI). At 364–379 (RIDFETRLAKLQAFVR) the chain is on the cytoplasmic side.

The protein belongs to the SEDS family. FtsW subfamily.

It is found in the cell inner membrane. The enzyme catalyses [GlcNAc-(1-&gt;4)-Mur2Ac(oyl-L-Ala-gamma-D-Glu-L-Lys-D-Ala-D-Ala)](n)-di-trans,octa-cis-undecaprenyl diphosphate + beta-D-GlcNAc-(1-&gt;4)-Mur2Ac(oyl-L-Ala-gamma-D-Glu-L-Lys-D-Ala-D-Ala)-di-trans,octa-cis-undecaprenyl diphosphate = [GlcNAc-(1-&gt;4)-Mur2Ac(oyl-L-Ala-gamma-D-Glu-L-Lys-D-Ala-D-Ala)](n+1)-di-trans,octa-cis-undecaprenyl diphosphate + di-trans,octa-cis-undecaprenyl diphosphate + H(+). It participates in cell wall biogenesis; peptidoglycan biosynthesis. In terms of biological role, peptidoglycan polymerase that is essential for cell division. The protein is Probable peptidoglycan glycosyltransferase FtsW of Moranella endobia (strain PCIT).